We begin with the raw amino-acid sequence, 418 residues long: Probable serine hydroxymethyltransferase (418 aa).

Residues Leu-118 and 122–124 (GHL) contribute to the (6S)-5,6,7,8-tetrahydrofolate site. Residue Lys-226 is modified to N6-(pyridoxal phosphate)lysine. (6S)-5,6,7,8-tetrahydrofolate is bound at residue 351-353 (SPF).

The protein belongs to the SHMT family. In terms of assembly, homodimer. It depends on pyridoxal 5'-phosphate as a cofactor.

It is found in the cytoplasm. The enzyme catalyses (6R)-5,10-methylene-5,6,7,8-tetrahydrofolate + glycine + H2O = (6S)-5,6,7,8-tetrahydrofolate + L-serine. It participates in one-carbon metabolism; tetrahydrofolate interconversion. Catalyzes the reversible interconversion of serine and glycine with tetrahydrofolate (THF) serving as the one-carbon carrier. This reaction serves as the major source of one-carbon groups required for the biosynthesis of purines, thymidylate, methionine, and other important biomolecules. The protein is Probable serine hydroxymethyltransferase of Mesomycoplasma hyopneumoniae (strain J / ATCC 25934 / NCTC 10110) (Mycoplasma hyopneumoniae).